The chain runs to 284 residues: MMMLPEACVANILAFTSPADAFSSSEVSSVFRLAGDSDFVWEKFLPSHYKSLISQSTDHHRIFSSKKEIYRCLCDSLLIDNARKLFKINKFSGKISYILSARDISITYSDHASYCSWSNVSDSRFSESAELITTDRLEIKGKIQTTVLSPNTKYGAYLIMKVTNGAYGLDLVPAETSVKSKNGQNNKNTTYLCCLDEKKQQMKRLFYGNREERMAMTVEAVGGDGKRREPKARDDGWLEIELGEFVTREGEDDEVNMSLTEVKGYQLKGGIVIDGIEVRPIPLK.

Positions 1–44 (MMMLPEACVANILAFTSPADAFSSSEVSSVFRLAGDSDFVWEKF) constitute an F-box domain.

The protein is F-box protein PP2-B13 (PP2B13) of Arabidopsis thaliana (Mouse-ear cress).